We begin with the raw amino-acid sequence, 94 residues long: Selenoprotein K (94 aa).

The helical transmembrane segment at 20-42 (LSFITDFFWGIAEFVVFFFKTLL) threads the bilayer. Residues 48–94 (KRRGYGGSSDSRYDDGRGPPGNPPRRMGRISHLRGPSPPPMAGGUGR) are disordered. Position 92 (Sec92) is a non-standard amino acid, selenocysteine.

This sequence belongs to the selenoprotein K family. In terms of assembly, interacts with DERL1, DERL2, DERL3 and SELENOS. The SELENOK-SELENOS complex interacts with VCP. Interacts with ZDHHC6. In terms of processing, cleaved by CAPN2/m-calpain in resting macrophages but not in activated macrophages. Macrophage activation up-regulates expression of the calpain inhibitor CAST/calpastatin, resulting in inhibition of CAPN2 activity. Post-translationally, truncated SELENOK proteins produced by failed UGA/Sec decoding are ubiquitinated by the CRL2(KLHDC2) complex, which recognizes the diglycine (Gly-Gly) at the C-terminus of truncated SELENOK proteins.

It localises to the endoplasmic reticulum membrane. Its subcellular location is the cell membrane. Required for Ca(2+) flux in immune cells and plays a role in T-cell proliferation and in T-cell and neutrophil migration. Involved in endoplasmic reticulum-associated degradation (ERAD) of soluble glycosylated proteins. Required for palmitoylation and cell surface expression of CD36 and involved in macrophage uptake of low-density lipoprotein and in foam cell formation. Together with ZDHHC6, required for palmitoylation of ITPR1 in immune cells, leading to regulate ITPR1 stability and function. Plays a role in protection of cells from ER stress-induced apoptosis. Protects cells from oxidative stress when overexpressed in cardiomyocytes. In Rattus norvegicus (Rat), this protein is Selenoprotein K.